An 870-amino-acid polypeptide reads, in one-letter code: Rho GTPase-activating protein 7 (870 aa).

In terms of domain architecture, PH spans threonine 18–alanine 125. The Rho-GAP domain maps to leucine 167–phenylalanine 367. Disordered stretches follow at residues serine 378–threonine 432 and aspartate 446–arginine 465. The segment covering asparagine 407–asparagine 417 has biased composition (acidic residues). Residues glycine 569–histidine 693 adopt a coiled-coil conformation. Residues histidine 736–isoleucine 793 are disordered. Basic and acidic residues predominate over residues lysine 777 to valine 787.

In terms of biological role, acts as a GTPase activator for the Rac-type GTPase by converting it to an inactive GDP-bound state. This Arabidopsis thaliana (Mouse-ear cress) protein is Rho GTPase-activating protein 7 (ROPGAP7).